Here is a 211-residue protein sequence, read N- to C-terminus: Proteasome subunit beta 2 (211 aa).

The propeptide at 1–17 is removed in mature form; by autocatalysis; that stretch reads MVIMGNELQLENKILKG. The Nucleophile role is filled by Thr18.

Belongs to the peptidase T1B family. In terms of assembly, the 20S proteasome core is composed of 14 alpha and 14 beta subunits that assemble into four stacked heptameric rings, resulting in a barrel-shaped structure. The two inner rings, each composed of seven catalytic beta subunits, are sandwiched by two outer rings, each composed of seven alpha subunits. The catalytic chamber with the active sites is on the inside of the barrel. Has a gated structure, the ends of the cylinder being occluded by the N-termini of the alpha-subunits. Is capped at one or both ends by the proteasome regulatory ATPase, PAN.

It localises to the cytoplasm. It carries out the reaction Cleavage of peptide bonds with very broad specificity.. Its activity is regulated as follows. The formation of the proteasomal ATPase PAN-20S proteasome complex, via the docking of the C-termini of PAN into the intersubunit pockets in the alpha-rings, triggers opening of the gate for substrate entry. Interconversion between the open-gate and close-gate conformations leads to a dynamic regulation of the 20S proteasome proteolysis activity. Functionally, component of the proteasome core, a large protease complex with broad specificity involved in protein degradation. The protein is Proteasome subunit beta 2 of Saccharolobus solfataricus (strain 98/2) (Sulfolobus solfataricus).